Consider the following 262-residue polypeptide: Adenosylcobinamide-GDP ribazoletransferase (262 aa).

A run of 4 helical transmembrane segments spans residues 43–63 (PLAG…LGAI), 121–141 (VALI…LPLL), 145–165 (GGGV…VWHW), and 195–215 (GVIL…AVLL).

It belongs to the CobS family. It depends on Mg(2+) as a cofactor.

It localises to the cell inner membrane. The enzyme catalyses alpha-ribazole + adenosylcob(III)inamide-GDP = adenosylcob(III)alamin + GMP + H(+). It carries out the reaction alpha-ribazole 5'-phosphate + adenosylcob(III)inamide-GDP = adenosylcob(III)alamin 5'-phosphate + GMP + H(+). It participates in cofactor biosynthesis; adenosylcobalamin biosynthesis; adenosylcobalamin from cob(II)yrinate a,c-diamide: step 7/7. Its function is as follows. Joins adenosylcobinamide-GDP and alpha-ribazole to generate adenosylcobalamin (Ado-cobalamin). Also synthesizes adenosylcobalamin 5'-phosphate from adenosylcobinamide-GDP and alpha-ribazole 5'-phosphate. The chain is Adenosylcobinamide-GDP ribazoletransferase from Sinorhizobium medicae (strain WSM419) (Ensifer medicae).